A 1010-amino-acid polypeptide reads, in one-letter code: Contactin-1 (1010 aa).

The first 19 residues, 1–19, serve as a signal peptide directing secretion; that stretch reads MRFFISHLVTLCFIFCVAD. 6 Ig-like C2-type domains span residues 33–123, 132–215, 232–317, 322–398, 404–491, and 496–592; these read PVFE…ATLS, PEEH…KSVF, PADI…ARVY, PEWV…AELK, PTFE…GVLE, and TRIT…LVVR. 2 disulfide bridges follow: cysteine 57/cysteine 106 and cysteine 150/cysteine 203. 2 N-linked (GlcNAc...) asparagine glycosylation sites follow: asparagine 200 and asparagine 249. A disulfide bridge connects residues cysteine 254 and cysteine 301. N-linked (GlcNAc...) asparagine glycosylation occurs at asparagine 329. Cystine bridges form between cysteine 343/cysteine 382 and cysteine 427/cysteine 475. Asparagine 448, asparagine 464, asparagine 485, and asparagine 512 each carry an N-linked (GlcNAc...) asparagine glycan. The cysteines at positions 517 and 574 are disulfide-linked. An N-linked (GlcNAc...) asparagine glycan is attached at asparagine 582. Fibronectin type-III domains are found at residues 597 to 695, 700 to 797, 802 to 897, and 899 to 990; these read PPGG…TEGA, APSD…SAQD, VPTD…APPS, and RPRI…TAGV. Polar residues predominate over residues 679-689; that stretch reads GTGEPSMPSQR. A disordered region spans residues 679 to 708; that stretch reads GTGEPSMPSQRIRTEGAPPNVAPSDVGGGG. An N-linked (GlcNAc...) asparagine glycan is attached at asparagine 924. Serine 984 is lipidated: GPI-anchor amidated serine. Positions 985–1010 are cleaved as a propeptide — removed in mature form; it reads GATAGVPTLLLGLVLPALGVLAYSGF.

This sequence belongs to the immunoglobulin superfamily. Contactin family. In terms of assembly, interacts with TNR.

The protein localises to the cell membrane. Mediates cell surface interactions during nervous system development. Interaction with TNR enhances the neurite outgrowth. In Gallus gallus (Chicken), this protein is Contactin-1 (CNTN1).